Reading from the N-terminus, the 648-residue chain is Threonine--tRNA ligase (648 aa).

Residues 1 to 61 form the TGS domain; that stretch reads MINITFPDGA…DTDGSIEIVT (61 aa). Residues 242–540 form a catalytic region; the sequence is DHRKLGKELD…LIETYKGAFP (299 aa). Zn(2+) contacts are provided by Cys336, His387, and His517.

Belongs to the class-II aminoacyl-tRNA synthetase family. As to quaternary structure, homodimer. It depends on Zn(2+) as a cofactor.

The protein resides in the cytoplasm. The catalysed reaction is tRNA(Thr) + L-threonine + ATP = L-threonyl-tRNA(Thr) + AMP + diphosphate + H(+). In terms of biological role, catalyzes the attachment of threonine to tRNA(Thr) in a two-step reaction: L-threonine is first activated by ATP to form Thr-AMP and then transferred to the acceptor end of tRNA(Thr). Also edits incorrectly charged L-seryl-tRNA(Thr). The protein is Threonine--tRNA ligase of Streptococcus uberis (strain ATCC BAA-854 / 0140J).